The following is a 381-amino-acid chain: Na(+)/H(+) antiporter NhaA 1 (381 aa).

11 helical membrane passes run 18–38 (GLLL…SYSA), 53–73 (ITHW…GLEL), 89–109 (SLPI…FLAL), 118–138 (GAGI…SLLG), 147–167 (VFLT…IAVF), 170–190 (TSIG…LFVL), 210–230 (YFML…AFVI), 251–271 (PVAF…AIES), 283–303 (FGII…FSSI), 321–341 (ILGA…ITLL), and 348–368 (IIVF…ITGF).

This sequence belongs to the NhaA Na(+)/H(+) (TC 2.A.33) antiporter family.

The protein resides in the cell inner membrane. The enzyme catalyses Na(+)(in) + 2 H(+)(out) = Na(+)(out) + 2 H(+)(in). Its function is as follows. Na(+)/H(+) antiporter that extrudes sodium in exchange for external protons. This Flavobacterium johnsoniae (strain ATCC 17061 / DSM 2064 / JCM 8514 / BCRC 14874 / CCUG 350202 / NBRC 14942 / NCIMB 11054 / UW101) (Cytophaga johnsonae) protein is Na(+)/H(+) antiporter NhaA 1.